Here is a 111-residue protein sequence, read N- to C-terminus: Probable 4-amino-4-deoxy-L-arabinose-phosphoundecaprenol flippase subunit ArnE (111 aa).

3 consecutive transmembrane segments (helical) span residues Leu38–Leu58, Leu61–Ala81, and Pro91–Ala111. One can recognise an EamA domain in the interval Leu40–Ser109.

It belongs to the ArnE family. As to quaternary structure, heterodimer of ArnE and ArnF.

Its subcellular location is the cell inner membrane. Its pathway is bacterial outer membrane biogenesis; lipopolysaccharide biosynthesis. Functionally, translocates 4-amino-4-deoxy-L-arabinose-phosphoundecaprenol (alpha-L-Ara4N-phosphoundecaprenol) from the cytoplasmic to the periplasmic side of the inner membrane. The chain is Probable 4-amino-4-deoxy-L-arabinose-phosphoundecaprenol flippase subunit ArnE from Salmonella paratyphi B (strain ATCC BAA-1250 / SPB7).